A 154-amino-acid chain; its full sequence is S-ribosylhomocysteine lyase (154 aa).

Residues His57, His61, and Cys124 each coordinate Fe cation.

The protein belongs to the LuxS family. As to quaternary structure, homodimer. Fe cation serves as cofactor.

It catalyses the reaction S-(5-deoxy-D-ribos-5-yl)-L-homocysteine = (S)-4,5-dihydroxypentane-2,3-dione + L-homocysteine. Involved in the synthesis of autoinducer 2 (AI-2) which is secreted by bacteria and is used to communicate both the cell density and the metabolic potential of the environment. The regulation of gene expression in response to changes in cell density is called quorum sensing. Catalyzes the transformation of S-ribosylhomocysteine (RHC) to homocysteine (HC) and 4,5-dihydroxy-2,3-pentadione (DPD). The polypeptide is S-ribosylhomocysteine lyase (Exiguobacterium sibiricum (strain DSM 17290 / CCUG 55495 / CIP 109462 / JCM 13490 / 255-15)).